A 209-amino-acid chain; its full sequence is Ribosomal RNA large subunit methyltransferase E (209 aa).

5 residues coordinate S-adenosyl-L-methionine: Gly-63, Trp-65, Asp-83, Asp-99, and Asp-124. Lys-164 serves as the catalytic Proton acceptor.

It belongs to the class I-like SAM-binding methyltransferase superfamily. RNA methyltransferase RlmE family.

The protein localises to the cytoplasm. The catalysed reaction is uridine(2552) in 23S rRNA + S-adenosyl-L-methionine = 2'-O-methyluridine(2552) in 23S rRNA + S-adenosyl-L-homocysteine + H(+). Its function is as follows. Specifically methylates the uridine in position 2552 of 23S rRNA at the 2'-O position of the ribose in the fully assembled 50S ribosomal subunit. This chain is Ribosomal RNA large subunit methyltransferase E, found in Vibrio cholerae serotype O1 (strain ATCC 39541 / Classical Ogawa 395 / O395).